The following is a 555-amino-acid chain: MSKQIVHGDQCRKKIIEGINVVANAVGITLGPKGRCVAIEQSYGPPKITKDGVSVAKAIQLKDKSLNVGAQFVISVASKTADVAGDGTTTATVIADAAVRELNKAEVAGIDIQEVRKGAEKAVEAVIADVRKNSSPVKNEEEIAQVATVSSNGDREIGEKIANAMKQVGQEGVITVEDSKNFNFEVEVVKGMRFDRGYISQYFATNREKMITEFENPYILLLDQKVSTVQPLVPVLEAVAHTGKPLVLIADDVDGEALTALILNNLKGSIKVVAVKAPGFGDRKKEMLEDIAILTNGEVITEQLGIKLEKVNDTSKLGTANRVIVTKDHTTIVHDKNNSDIEKKVNSRCEQIREAIKDTTSDYEKEKLQERLAKLRNGVAVLKVGGATEVEQKERKDRVEDALHATRAAVEEGIVPGGGVALFYASRVLDSLKFDNEDQRVGINIIKKVLEAPVRQIVKNAGGKEDVVVNELSKSNDKNRGFDARTMQYVDMIKAGIVDPTKVVRTALQDAFSVASLVIATSAMITDHEEDNNTGNRSGGGVGGGHHGGMGGMDF.

Residues 29-32, lysine 50, 86-90, glycine 418, and aspartate 499 each bind ATP; these read TLGP and DGTTT. The interval 528-555 is disordered; the sequence is HEEDNNTGNRSGGGVGGGHHGGMGGMDF. Residues 537–555 are compositionally biased toward gly residues; the sequence is RSGGGVGGGHHGGMGGMDF.

Belongs to the chaperonin (HSP60) family. In terms of assembly, forms a cylinder of 14 subunits composed of two heptameric rings stacked back-to-back. Interacts with the co-chaperonin GroES.

It is found in the cytoplasm. The catalysed reaction is ATP + H2O + a folded polypeptide = ADP + phosphate + an unfolded polypeptide.. Functionally, together with its co-chaperonin GroES, plays an essential role in assisting protein folding. The GroEL-GroES system forms a nano-cage that allows encapsulation of the non-native substrate proteins and provides a physical environment optimized to promote and accelerate protein folding. This chain is Chaperonin GroEL, found in Orientia tsutsugamushi (strain Ikeda) (Rickettsia tsutsugamushi).